Consider the following 300-residue polypeptide: NAD kinase (300 aa).

Catalysis depends on Asp-75, which acts as the Proton acceptor. NAD(+) is bound by residues Asp-75–Gly-76, Asn-149–Asp-150, Arg-177, Asp-179, Thr-190–Ser-195, Ala-214, and Gln-248.

The protein belongs to the NAD kinase family. A divalent metal cation is required as a cofactor.

The protein localises to the cytoplasm. The enzyme catalyses NAD(+) + ATP = ADP + NADP(+) + H(+). Its function is as follows. Involved in the regulation of the intracellular balance of NAD and NADP, and is a key enzyme in the biosynthesis of NADP. Catalyzes specifically the phosphorylation on 2'-hydroxyl of the adenosine moiety of NAD to yield NADP. The protein is NAD kinase of Burkholderia ambifaria (strain MC40-6).